The primary structure comprises 162 residues: SsrA-binding protein (162 aa).

Belongs to the SmpB family.

It localises to the cytoplasm. In terms of biological role, required for rescue of stalled ribosomes mediated by trans-translation. Binds to transfer-messenger RNA (tmRNA), required for stable association of tmRNA with ribosomes. tmRNA and SmpB together mimic tRNA shape, replacing the anticodon stem-loop with SmpB. tmRNA is encoded by the ssrA gene; the 2 termini fold to resemble tRNA(Ala) and it encodes a 'tag peptide', a short internal open reading frame. During trans-translation Ala-aminoacylated tmRNA acts like a tRNA, entering the A-site of stalled ribosomes, displacing the stalled mRNA. The ribosome then switches to translate the ORF on the tmRNA; the nascent peptide is terminated with the 'tag peptide' encoded by the tmRNA and targeted for degradation. The ribosome is freed to recommence translation, which seems to be the essential function of trans-translation. The protein is SsrA-binding protein of Buchnera aphidicola subsp. Acyrthosiphon pisum (strain 5A).